The following is a 339-amino-acid chain: Dihydroorotate dehydrogenase (quinone) (339 aa).

FMN-binding positions include A62–K66 and T86. K66 contacts substrate. N111–F115 contacts substrate. Residues N139 and N172 each coordinate FMN. N172 serves as a coordination point for substrate. S175 functions as the Nucleophile in the catalytic mechanism. N177 lines the substrate pocket. 2 residues coordinate FMN: K217 and T245. N246–T247 serves as a coordination point for substrate. Residues G268, G297, and F318–S319 contribute to the FMN site.

This sequence belongs to the dihydroorotate dehydrogenase family. Type 2 subfamily. As to quaternary structure, monomer. It depends on FMN as a cofactor.

Its subcellular location is the cell membrane. The enzyme catalyses (S)-dihydroorotate + a quinone = orotate + a quinol. The protein operates within pyrimidine metabolism; UMP biosynthesis via de novo pathway; orotate from (S)-dihydroorotate (quinone route): step 1/1. Catalyzes the conversion of dihydroorotate to orotate with quinone as electron acceptor. The chain is Dihydroorotate dehydrogenase (quinone) from Shewanella halifaxensis (strain HAW-EB4).